Here is a 459-residue protein sequence, read N- to C-terminus: MTDFQYATDQDTIAAQATAPGRGGVGIIRLSGPKSLAIAKQIIGFEPKPRYAHYVPFKTTGQEQLDEGIALYFPGPNSFTGEDVFELQGHGGPVIMDMLLSHCVALGARLARPGEFSERAFMNDKMDLTQAEAIADLIDSTSEQAAKCALRSLQGAFSKRVDELVEALIHLRIYVEAAIDFPEEEIDFIGDGKVAAELAGIQAKLAEVLKEANQGALIREGMNVVIAGRPNAGKSSLLNALSGKESAIVTNIEGTTRDVLREHIHLDGMPLHIIDTAGLRDSPDEVERIGIQRAWDEISKADRILMMVDSQSIDSKDPNEIWPEFMEKLGDTKHLTLVRNKVDLTKEGTGIETVSGVPVVSLSAKTGEGVTDLTEHLKAVMGFDSTTEGGFIARRRHIEALNKANRFLDAGNEQLHGYGAGELLAEDLKEAQQALSEITGAFTSDDLLGRIFGSFCIGK.

The (6S)-5-formyl-5,6,7,8-tetrahydrofolate site is built by Arg-29, Glu-86, and Lys-125. Positions 221-382 constitute a TrmE-type G domain; that stretch reads GMNVVIAGRP…LTEHLKAVMG (162 aa). K(+) is bound at residue Asn-231. Residues 231–236, 250–256, and 275–278 contribute to the GTP site; these read NAGKSS, TNIEGTT, and DTAG. Ser-235 provides a ligand contact to Mg(2+). 3 residues coordinate K(+): Thr-250, Ile-252, and Thr-255. Thr-256 is a Mg(2+) binding site. Residue Lys-459 participates in (6S)-5-formyl-5,6,7,8-tetrahydrofolate binding.

It belongs to the TRAFAC class TrmE-Era-EngA-EngB-Septin-like GTPase superfamily. TrmE GTPase family. In terms of assembly, homodimer. Heterotetramer of two MnmE and two MnmG subunits. The cofactor is K(+).

The protein resides in the cytoplasm. Functionally, exhibits a very high intrinsic GTPase hydrolysis rate. Involved in the addition of a carboxymethylaminomethyl (cmnm) group at the wobble position (U34) of certain tRNAs, forming tRNA-cmnm(5)s(2)U34. This Marinomonas sp. (strain MWYL1) protein is tRNA modification GTPase MnmE.